The primary structure comprises 627 residues: tRNA uridine 5-carboxymethylaminomethyl modification enzyme MnmG (627 aa).

FAD is bound by residues 16–21 (GAGHAG), Val-128, and Ser-183. An NAD(+)-binding site is contributed by 275–289 (GPRYCPSIEDKVMRF). FAD is bound at residue Gln-372.

This sequence belongs to the MnmG family. Homodimer. Heterotetramer of two MnmE and two MnmG subunits. Requires FAD as cofactor.

Its subcellular location is the cytoplasm. Functionally, NAD-binding protein involved in the addition of a carboxymethylaminomethyl (cmnm) group at the wobble position (U34) of certain tRNAs, forming tRNA-cmnm(5)s(2)U34. The protein is tRNA uridine 5-carboxymethylaminomethyl modification enzyme MnmG of Geobacter sulfurreducens (strain ATCC 51573 / DSM 12127 / PCA).